A 442-amino-acid chain; its full sequence is Cytokine receptor-like factor 3 (442 aa).

N-acetylmethionine is present on methionine 1. A coiled-coil region spans residues 10-57 (ELLLQEARENVEAAQSYRRELGHRLEGLREARRQIKESASQTRDVLKQ). Residues 181 to 274 (PPVQIEELIE…PQIGHSTLVP (94 aa)) enclose the Fibronectin type-III domain.

It belongs to the cytokine receptor-like factor 3 family. In terms of tissue distribution, expressed in several embryonic and adult tissues, including adult and fetal brain, liver, spleen and pancreas. Expressed in adult, but not fetal kidney. Expressed in skin and squamous cell carcinoma (SCC) and in several other cancer types. Also detected in lesion actinic keratosis (AK).

The protein localises to the cytoplasm. Functionally, may play a role in the negative regulation of cell cycle progression. This chain is Cytokine receptor-like factor 3 (CRLF3), found in Homo sapiens (Human).